The primary structure comprises 244 residues: DNA repair protein RecO (244 aa).

Belongs to the RecO family.

Involved in DNA repair and RecF pathway recombination. The chain is DNA repair protein RecO from Polynucleobacter necessarius subsp. necessarius (strain STIR1).